Here is a 180-residue protein sequence, read N- to C-terminus: Pro-glucagon (180 aa).

Positions M1–Q20 are cleaved as a signal peptide. The segment at T26–T59 is disordered. Phosphoserine is present on S54. Residues N84 to A89 constitute a propeptide that is removed on maturation. S105 and S108 each carry phosphoserine. R127 is modified (arginine amide). A propeptide spanning residues D131 to R145 is cleaved from the precursor. Phosphoserine is present on residues S150 and S152.

The protein belongs to the glucagon family. In terms of processing, proglucagon is post-translationally processed in a tissue-specific manner in pancreatic A cells and intestinal L cells. In pancreatic A cells, the major bioactive hormone is glucagon cleaved by PCSK2/PC2. In the intestinal L cells PCSK1/PC1 liberates GLP-1, GLP-2, glicentin and oxyntomodulin. GLP-1 is further N-terminally truncated by post-translational processing in the intestinal L cells resulting in GLP-1(7-37) GLP-1-(7-36)amide. The C-terminal amidation is neither important for the metabolism of GLP-1 nor for its effects on the endocrine pancreas. As to expression, secreted in the A cells of the islets of Langerhans. In terms of tissue distribution, secreted in the A cells of the islets of Langerhans. Secreted from enteroendocrine L cells throughout the gastrointestinal tract. Also secreted in selected neurons in the brain. Secreted from enteroendocrine cells throughout the gastrointestinal tract. Also secreted in selected neurons in the brain. As to expression, secreted from enteroendocrine cells throughout the gastrointestinal tract.

The protein resides in the secreted. Functionally, plays a key role in glucose metabolism and homeostasis. Regulates blood glucose by increasing gluconeogenesis and decreasing glycolysis. A counterregulatory hormone of insulin, raises plasma glucose levels in response to insulin-induced hypoglycemia. Plays an important role in initiating and maintaining hyperglycemic conditions in diabetes. Potent stimulator of glucose-dependent insulin release. Also stimulates insulin release in response to IL6. Plays important roles on gastric motility and the suppression of plasma glucagon levels. May be involved in the suppression of satiety and stimulation of glucose disposal in peripheral tissues, independent of the actions of insulin. Has growth-promoting activities on intestinal epithelium. May also regulate the hypothalamic pituitary axis (HPA) via effects on LH, TSH, CRH, oxytocin, and vasopressin secretion. Increases islet mass through stimulation of islet neogenesis and pancreatic beta cell proliferation. Inhibits beta cell apoptosis. Its function is as follows. Stimulates intestinal growth and up-regulates villus height in the small intestine, concomitant with increased crypt cell proliferation and decreased enterocyte apoptosis. The gastrointestinal tract, from the stomach to the colon is the principal target for GLP-2 action. Plays a key role in nutrient homeostasis, enhancing nutrient assimilation through enhanced gastrointestinal function, as well as increasing nutrient disposal. Stimulates intestinal glucose transport and decreases mucosal permeability. In terms of biological role, significantly reduces food intake. Inhibits gastric emptying in humans. Suppression of gastric emptying may lead to increased gastric distension, which may contribute to satiety by causing a sensation of fullness. Functionally, may modulate gastric acid secretion and the gastro-pyloro-duodenal activity. May play an important role in intestinal mucosal growth in the early period of life. This chain is Pro-glucagon, found in Homo sapiens (Human).